The primary structure comprises 437 residues: MILLWSCLLVAVVGILGTATPQPGNSSLHRLTRQLLQQYHKEVRPVYNWAEATTVYLDLCVHAVLDVDVQNQKLKTSVWYREVWNDEFLSWNSSLFDEIQEISLPLSALWAPDIIINEFVDVERSPDLPYVYVNSSGTIRNHKPIQVVSACSLQTYAFPFDIQNCSLTFNSILHTVEDIDLGFLRNREDIENDKRAFMNDSEWQLLSVSSTYHIRQSSAGDFAQIRFNVVIRRCPLAYVVSLLIPSIFLMLVDLGSFYLPPNCRARIVFKTNVLVGYTVFRVNMSDEVPRSAGCTPLIGVFFTVCMALLVLSLSKSILLIKFLYEERHSGQERPLMCLQGDSDAEESRLYLGAPRADVTESPVHQEHRVPSDTLKDFWFQFRSINNSLRTRDQIHQKEVEWLAILYRFDQLLFRIYLAVLGLYTVTLCSLWALWSRM.

An N-terminal signal peptide occupies residues 1–21; the sequence is MILLWSCLLVAVVGILGTATP. The Extracellular portion of the chain corresponds to 22–238; sequence QPGNSSLHRL…VVIRRCPLAY (217 aa). 3 N-linked (GlcNAc...) asparagine glycosylation sites follow: asparagine 25, asparagine 92, and asparagine 134. A disulfide bond links cysteine 151 and cysteine 165. A helical membrane pass occupies residues 239–259; the sequence is VVSLLIPSIFLMLVDLGSFYL. Over 260–264 the chain is Cytoplasmic; the sequence is PPNCR. The helical transmembrane segment at 265 to 282 threads the bilayer; the sequence is ARIVFKTNVLVGYTVFRV. Residue asparagine 283 is glycosylated (N-linked (GlcNAc...) asparagine). Residues 283–292 are Extracellular-facing; the sequence is NMSDEVPRSA. A helical transmembrane segment spans residues 293–313; that stretch reads GCTPLIGVFFTVCMALLVLSL. At 314–410 the chain is on the cytoplasmic side; sequence SKSILLIKFL…WLAILYRFDQ (97 aa). The segment at 377 to 409 is HA-stretch; determines single-channel conductance in 5-HT3 receptors; that stretch reads FWFQFRSINNSLRTRDQIHQKEVEWLAILYRFD. A helical membrane pass occupies residues 411–431; sequence LLFRIYLAVLGLYTVTLCSLW. Topologically, residues 432–437 are extracellular; it reads ALWSRM.

It belongs to the ligand-gated ion channel (TC 1.A.9) family. 5-hydroxytryptamine receptor (TC 1.A.9.2) subfamily. HTR3B sub-subfamily. As to quaternary structure, forms homopentameric as well as heteropentameric serotonin-activated cation-selective channel complexes with HTR3A. The homomeric complex is not functional. Heteropentameric complexes display properties which resemble that of neuronal serotonin-activated channels in vivo. N-glycosylation is required for membrane localization.

It localises to the postsynaptic cell membrane. The protein localises to the cell membrane. It carries out the reaction Na(+)(in) = Na(+)(out). The catalysed reaction is K(+)(in) = K(+)(out). It catalyses the reaction Ca(2+)(in) = Ca(2+)(out). Forms serotonin (5-hydroxytryptamine/5-HT3)-activated cation-selective channel complexes, which when activated cause fast, depolarizing responses in neurons. The protein is 5-hydroxytryptamine receptor 3B of Mus musculus (Mouse).